Reading from the N-terminus, the 217-residue chain is Large ribosomal subunit protein uL1 (217 aa).

An N-acetylserine modification is found at S2. Y11 is modified (phosphotyrosine). An N6-acetyllysine mark is found at K91 and K106. K118 carries the N6-acetyllysine; alternate modification. K118 participates in a covalent cross-link: Glycyl lysine isopeptide (Lys-Gly) (interchain with G-Cter in SUMO1); alternate. A Glycyl lysine isopeptide (Lys-Gly) (interchain with G-Cter in SUMO2); alternate cross-link involves residue K118.

The protein belongs to the universal ribosomal protein uL1 family. In terms of assembly, component of the large ribosomal subunit.

The protein resides in the cytoplasm. Its function is as follows. Component of the large ribosomal subunit. The ribosome is a large ribonucleoprotein complex responsible for the synthesis of proteins in the cell. This is Large ribosomal subunit protein uL1 (RPL10A) from Macaca fascicularis (Crab-eating macaque).